A 113-amino-acid chain; its full sequence is Large ribosomal subunit protein uL22 (113 aa).

The protein belongs to the universal ribosomal protein uL22 family. As to quaternary structure, part of the 50S ribosomal subunit.

This protein binds specifically to 23S rRNA; its binding is stimulated by other ribosomal proteins, e.g. L4, L17, and L20. It is important during the early stages of 50S assembly. It makes multiple contacts with different domains of the 23S rRNA in the assembled 50S subunit and ribosome. Its function is as follows. The globular domain of the protein is located near the polypeptide exit tunnel on the outside of the subunit, while an extended beta-hairpin is found that lines the wall of the exit tunnel in the center of the 70S ribosome. This Bacillus thuringiensis subsp. konkukian (strain 97-27) protein is Large ribosomal subunit protein uL22.